Consider the following 1051-residue polypeptide: Anucleate primary sterigmata protein B (1051 aa).

Coiled-coil stretches lie at residues 10–200 (IDRL…YAIA) and 239–285 (STLV…ELKL). The span at 58–90 (KDNQGLKRKIRDLEKQLKDQQSDKESMLNHDPE) shows a compositional bias: basic and acidic residues. 2 disordered regions span residues 58–100 (KDNQ…DRDH) and 141–160 (LKSL…REER). The segment covering 294 to 303 (AGDSILDRSA) has biased composition (basic and acidic residues). Disordered stretches follow at residues 294 to 329 (AGDS…AERE), 877 to 902 (NHPR…LAER), 909 to 928 (NTAA…QMTN), and 984 to 1051 (EERD…DIEV). The segment covering 309-321 (RPSSSISDRTGQS) has biased composition (polar residues). Coiled-coil stretches lie at residues 325–743 (DAER…RNSM) and 787–878 (RNLL…LQNH). Polar residues-rich tracts occupy residues 877-897 (NHPR…SSTI) and 916-928 (ARSS…QMTN). The stretch at 950–1004 (NQEVWIKRLHELERRLKAEREARLLDRNGARRRLEERDAENKRLRAQLDRQRLRQ) forms a coiled coil. Composition is skewed to basic and acidic residues over residues 984–1001 (EERD…DRQR) and 1028–1040 (EGYR…HSSS).

It localises to the cytoplasm. Functionally, involved in regulation of nuclear migration. May be involved in regulating nuclear positioning. This chain is Anucleate primary sterigmata protein B (apsB), found in Emericella nidulans (strain FGSC A4 / ATCC 38163 / CBS 112.46 / NRRL 194 / M139) (Aspergillus nidulans).